Here is an 86-residue protein sequence, read N- to C-terminus: Small ribosomal subunit protein bS18 (86 aa).

This sequence belongs to the bacterial ribosomal protein bS18 family. In terms of assembly, part of the 30S ribosomal subunit. Forms a tight heterodimer with protein bS6.

Binds as a heterodimer with protein bS6 to the central domain of the 16S rRNA, where it helps stabilize the platform of the 30S subunit. In Campylobacter curvus (strain 525.92), this protein is Small ribosomal subunit protein bS18.